The chain runs to 225 residues: NAD(P)H-quinone oxidoreductase subunit K, chloroplastic (225 aa).

Residues Cys-43, Cys-44, Cys-108, and Cys-139 each coordinate [4Fe-4S] cluster.

The protein belongs to the complex I 20 kDa subunit family. NDH is composed of at least 16 different subunits, 5 of which are encoded in the nucleus. It depends on [4Fe-4S] cluster as a cofactor.

The protein resides in the plastid. The protein localises to the chloroplast thylakoid membrane. The enzyme catalyses a plastoquinone + NADH + (n+1) H(+)(in) = a plastoquinol + NAD(+) + n H(+)(out). It carries out the reaction a plastoquinone + NADPH + (n+1) H(+)(in) = a plastoquinol + NADP(+) + n H(+)(out). Functionally, NDH shuttles electrons from NAD(P)H:plastoquinone, via FMN and iron-sulfur (Fe-S) centers, to quinones in the photosynthetic chain and possibly in a chloroplast respiratory chain. The immediate electron acceptor for the enzyme in this species is believed to be plastoquinone. Couples the redox reaction to proton translocation, and thus conserves the redox energy in a proton gradient. The protein is NAD(P)H-quinone oxidoreductase subunit K, chloroplastic of Triticum aestivum (Wheat).